The primary structure comprises 493 residues: Glutamyl-tRNA(Gln) amidotransferase subunit A (493 aa).

Active-site charge relay system residues include Lys78 and Ser158. Ser182 functions as the Acyl-ester intermediate in the catalytic mechanism.

It belongs to the amidase family. GatA subfamily. As to quaternary structure, heterotrimer of A, B and C subunits.

It catalyses the reaction L-glutamyl-tRNA(Gln) + L-glutamine + ATP + H2O = L-glutaminyl-tRNA(Gln) + L-glutamate + ADP + phosphate + H(+). Its function is as follows. Allows the formation of correctly charged Gln-tRNA(Gln) through the transamidation of misacylated Glu-tRNA(Gln) in organisms which lack glutaminyl-tRNA synthetase. The reaction takes place in the presence of glutamine and ATP through an activated gamma-phospho-Glu-tRNA(Gln). The sequence is that of Glutamyl-tRNA(Gln) amidotransferase subunit A from Azorhizobium caulinodans (strain ATCC 43989 / DSM 5975 / JCM 20966 / LMG 6465 / NBRC 14845 / NCIMB 13405 / ORS 571).